The following is a 21-amino-acid chain: DNWWPKPPHQGPRPPRPRPKP.

The span at 1–14 (DNWWPKPPHQGPRP) shows a compositional bias: pro residues. The segment at 1–21 (DNWWPKPPHQGPRPPRPRPKP) is disordered. 3 implicated in receptor binding regions span residues 3–6 (WWPK), 8–11 (PHQG), and 13–14 (RP).

As to quaternary structure, monomer. In terms of tissue distribution, expressed by the venom gland.

It is found in the secreted. Functionally, in vitro, reversibly blocks human muscle-type nicotinic acetylcholine receptors (nAChR) alpha-1-beta-1-epsilon-delta/CHRNA1-CHRNB1-CHRNE-CHRND (EC(50)=0.44 uM) and alpha-1-beta-1-gamma-delta/CHRNA1-CHRNB1-CHRNG-CHRND (EC(50)=1.56 uM). Binds to nAChR from T.californica (IC(50)=0.03-0.18 uM), human neuronal nAChR alpha-7/CHRNA7 (IC(50)=22 uM) and acetylcholine-binding proteins (AChBP) from L.stagnalis (IC(50)=63 uM) and A.californica (IC(50)=230 uM). In Azemiops feae (Fea's viper), this protein is Azemiopsin.